The chain runs to 152 residues: Large ribosomal subunit protein uL13 (152 aa).

Belongs to the universal ribosomal protein uL13 family. In terms of assembly, part of the 50S ribosomal subunit.

Functionally, this protein is one of the early assembly proteins of the 50S ribosomal subunit, although it is not seen to bind rRNA by itself. It is important during the early stages of 50S assembly. The polypeptide is Large ribosomal subunit protein uL13 (Wolbachia pipientis subsp. Culex pipiens (strain wPip)).